A 1113-amino-acid chain; its full sequence is Poly(A) RNA polymerase gld-2 (1113 aa).

4 disordered regions span residues 1 to 113, 134 to 175, 205 to 266, and 445 to 513; these read MVMA…PKYH, RPIF…PTQP, LYRS…GQDP, and LDDE…DEST. A compositionally biased stretch (low complexity) spans 22–52; it reads SPSVDSVSRVQQQSGGFAFYNQQSNHQYQQS. Residues 60–106 show a composition bias toward polar residues; the sequence is SRDGNTGYYNNHSGNKRQTYNNQRGGRSYNHRGNSNYQQNGEYSGNQ. Residues 149 to 172 are compositionally biased toward low complexity; that stretch reads RRSSPPSPSALSSSTANSTSNRAP. The segment covering 223–233 has biased composition (pro residues); sequence YKQPPPQPPST. Positions 451–485 are enriched in basic and acidic residues; sequence GADHDKTIDENRRRIHKSQEPRIGTEEKALNELPR. Residues 492–507 show a composition bias toward low complexity; the sequence is SSCSSISSVSESSSPS. The Mg(2+) site is built by aspartate 606 and aspartate 608. Positions 780-816 constitute a PAP-associated domain; it reads TLGELLIGFLDYYANEFNYDRDAISIRQGRRVERAAL. Disordered regions lie at residues 817–854 and 966–1113; these read AVRPKIHSNSEGDKETPPPSSSASTSSIHNGGTPGIPM and GPGH…NVSQ. Polar residues predominate over residues 972–994; it reads YQQQSNQNLSRPQRPGSNQGYQM. Composition is skewed to low complexity over residues 995–1035 and 1044–1061; these read NNNR…SRSN and QQNSQKGSSGVSVSKENV. A compositionally biased stretch (basic and acidic residues) spans 1069–1084; the sequence is VDKKQQNSNRKDDGNR.

It belongs to the DNA polymerase type-B-like family. GLD2 subfamily. As to quaternary structure, interacts with gld-3. It depends on Mg(2+) as a cofactor. The cofactor is Mn(2+). In terms of tissue distribution, germline-specific.

Its subcellular location is the cytoplasm. It carries out the reaction RNA(n) + ATP = RNA(n)-3'-adenine ribonucleotide + diphosphate. Cytoplasmic poly(A) RNA polymerase that adds successive AMP monomers to the 3'-end of specific RNAs, forming a poly(A) tail. Acts as a regulator of mitosis/meiosis required for progression through meiotic prophase during oogenesis and spermatogenesis and for promotion of the entry into meiosis from the mitotic cell cycle. May act by regulating and activating gld-1 mRNA activity in germline. Required for polyadenylation of neg-1 mRNA during embryogenesis. The sequence is that of Poly(A) RNA polymerase gld-2 (gld-2) from Caenorhabditis elegans.